The sequence spans 190 residues: Ion-translocating oxidoreductase complex subunit B (190 aa).

The hydrophobic stretch occupies residues 1 to 26 (MLTFWLAVATLSALALVAGAVLGFAA). The 4Fe-4S domain occupies 32 to 90 (KTDPVAERIDALLPQSQCAQCGYPGCRPYAEAVAGGAPINKCVPGGEAVMLKIAAQLSV). Cysteine 49, cysteine 52, cysteine 57, cysteine 73, cysteine 115, cysteine 118, cysteine 121, cysteine 125, cysteine 145, cysteine 148, cysteine 151, and cysteine 155 together coordinate [4Fe-4S] cluster. 2 4Fe-4S ferredoxin-type domains span residues 106 to 135 (RVAWIDEGNCIGCTKCIQACPVDAIVGATR) and 136 to 165 (AVHTVVSDLCTGCDLCVAPCPTNCIEMRPL).

Belongs to the 4Fe4S bacterial-type ferredoxin family. RnfB subfamily. As to quaternary structure, the complex is composed of six subunits: RnfA, RnfB, RnfC, RnfD, RnfE and RnfG. [4Fe-4S] cluster is required as a cofactor.

Its subcellular location is the cell inner membrane. In terms of biological role, part of a membrane-bound complex that couples electron transfer with translocation of ions across the membrane. This is Ion-translocating oxidoreductase complex subunit B from Sodalis glossinidius (strain morsitans).